The sequence spans 774 residues: Phosphoribosylformylglycinamidine synthase subunit PurL (774 aa).

Residue His51 is part of the active site. ATP-binding residues include Tyr54 and Lys93. Residue Glu95 coordinates Mg(2+). Substrate is bound by residues 96–99 (SHNH) and Arg118. The Proton acceptor role is filled by His97. Asp119 is a binding site for Mg(2+). Position 242 (Gln242) interacts with substrate. A Mg(2+)-binding site is contributed by Asp270. 314-316 (ESQ) contributes to the substrate binding site. ATP contacts are provided by Asp514 and Gly551. Residue Asn552 participates in Mg(2+) binding. Ser554 contributes to the substrate binding site.

This sequence belongs to the FGAMS family. In terms of assembly, monomer. Part of the FGAM synthase complex composed of 1 PurL, 1 PurQ and 2 PurS subunits.

The protein resides in the cytoplasm. It carries out the reaction N(2)-formyl-N(1)-(5-phospho-beta-D-ribosyl)glycinamide + L-glutamine + ATP + H2O = 2-formamido-N(1)-(5-O-phospho-beta-D-ribosyl)acetamidine + L-glutamate + ADP + phosphate + H(+). The protein operates within purine metabolism; IMP biosynthesis via de novo pathway; 5-amino-1-(5-phospho-D-ribosyl)imidazole from N(2)-formyl-N(1)-(5-phospho-D-ribosyl)glycinamide: step 1/2. Functionally, part of the phosphoribosylformylglycinamidine synthase complex involved in the purines biosynthetic pathway. Catalyzes the ATP-dependent conversion of formylglycinamide ribonucleotide (FGAR) and glutamine to yield formylglycinamidine ribonucleotide (FGAM) and glutamate. The FGAM synthase complex is composed of three subunits. PurQ produces an ammonia molecule by converting glutamine to glutamate. PurL transfers the ammonia molecule to FGAR to form FGAM in an ATP-dependent manner. PurS interacts with PurQ and PurL and is thought to assist in the transfer of the ammonia molecule from PurQ to PurL. The polypeptide is Phosphoribosylformylglycinamidine synthase subunit PurL (Gloeobacter violaceus (strain ATCC 29082 / PCC 7421)).